The sequence spans 511 residues: Ribose import ATP-binding protein RbsA (511 aa).

2 ABC transporter domains span residues 13–249 (VSMD…VGRA) and 260–503 (ALGE…AGIA). 45–52 (GENGAGKS) lines the ATP pocket.

This sequence belongs to the ABC transporter superfamily. Ribose importer (TC 3.A.1.2.1) family. The complex is composed of an ATP-binding protein (RbsA), two transmembrane proteins (RbsC) and a solute-binding protein (RbsB).

It localises to the cell inner membrane. It catalyses the reaction D-ribose(out) + ATP + H2O = D-ribose(in) + ADP + phosphate + H(+). In terms of biological role, part of the ABC transporter complex RbsABC involved in ribose import. Responsible for energy coupling to the transport system. This chain is Ribose import ATP-binding protein RbsA, found in Roseobacter denitrificans (strain ATCC 33942 / OCh 114) (Erythrobacter sp. (strain OCh 114)).